A 475-amino-acid chain; its full sequence is 3-isopropylmalate dehydratase large subunit (475 aa).

Positions 352, 412, and 415 each coordinate [4Fe-4S] cluster.

It belongs to the aconitase/IPM isomerase family. LeuC type 1 subfamily. Heterodimer of LeuC and LeuD. [4Fe-4S] cluster is required as a cofactor.

It catalyses the reaction (2R,3S)-3-isopropylmalate = (2S)-2-isopropylmalate. It functions in the pathway amino-acid biosynthesis; L-leucine biosynthesis; L-leucine from 3-methyl-2-oxobutanoate: step 2/4. Catalyzes the isomerization between 2-isopropylmalate and 3-isopropylmalate, via the formation of 2-isopropylmaleate. The protein is 3-isopropylmalate dehydratase large subunit of Gluconobacter oxydans (strain 621H) (Gluconobacter suboxydans).